The primary structure comprises 382 residues: Mannitol-1-phosphate 5-dehydrogenase (382 aa).

3-14 (ALHFGAGNIGRG) contacts NAD(+).

The protein belongs to the mannitol dehydrogenase family.

It carries out the reaction D-mannitol 1-phosphate + NAD(+) = beta-D-fructose 6-phosphate + NADH + H(+). The protein is Mannitol-1-phosphate 5-dehydrogenase of Pectobacterium atrosepticum (strain SCRI 1043 / ATCC BAA-672) (Erwinia carotovora subsp. atroseptica).